A 286-amino-acid polypeptide reads, in one-letter code: Aquaporin PIP1-1 (286 aa).

Position 1 is an N-acetylmethionine (methionine 1). The interval methionine 1 to proline 34 is disordered. Over methionine 1–glycine 54 the chain is Cytoplasmic. Residues isoleucine 55 to valine 75 traverse the membrane as a helical segment. The Extracellular portion of the chain corresponds to lysine 76–alanine 91. The chain crosses the membrane as a helical span at residues tryptophan 92–histidine 112. The Cytoplasmic segment spans residues isoleucine 113–alanine 132. Positions asparagine 114–alanine 116 match the NPA 1 motif. The chain crosses the membrane as a helical span at residues leucine 133–phenylalanine 153. Residues glutamine 154–lysine 174 are Extracellular-facing. The chain crosses the membrane as a helical span at residues glycine 175 to alanine 195. The Cytoplasmic segment spans residues threonine 196–proline 208. The chain crosses the membrane as a helical span at residues isoleucine 209–isoleucine 229. At threonine 230–tryptophan 256 the chain is on the extracellular side. The NPA 2 signature appears at asparagine 235–alanine 237. Residues valine 257–isoleucine 277 form a helical membrane-spanning segment. At arginine 278–serine 286 the chain is on the cytoplasmic side. At serine 284 the chain carries Phosphoserine.

Belongs to the MIP/aquaporin (TC 1.A.8) family. PIP (TC 1.A.8.11) subfamily. Widely expressed. Expressed in roots, above ground and in flower buds.

The protein resides in the cell membrane. In terms of biological role, water channel required to facilitate the transport of water across cell membrane. Its function is impaired by Hg(2+). The polypeptide is Aquaporin PIP1-1 (PIP1-1) (Arabidopsis thaliana (Mouse-ear cress)).